A 249-amino-acid polypeptide reads, in one-letter code: Ribosomal RNA small subunit methyltransferase J (249 aa).

S-adenosyl-L-methionine-binding positions include 101–102 (RD), 117–118 (ER), 153–154 (SS), and aspartate 171.

It belongs to the methyltransferase superfamily. RsmJ family.

The protein resides in the cytoplasm. The enzyme catalyses guanosine(1516) in 16S rRNA + S-adenosyl-L-methionine = N(2)-methylguanosine(1516) in 16S rRNA + S-adenosyl-L-homocysteine + H(+). In terms of biological role, specifically methylates the guanosine in position 1516 of 16S rRNA. The chain is Ribosomal RNA small subunit methyltransferase J from Salmonella arizonae (strain ATCC BAA-731 / CDC346-86 / RSK2980).